A 276-amino-acid polypeptide reads, in one-letter code: Dermonecrotic toxin LlSicTox-alphaIV2ii (276 aa).

The active site involves H5. Mg(2+) contacts are provided by E25 and D27. The Nucleophile role is filled by H41. Intrachain disulfides connect C45/C51 and C47/C193. Residue D85 coordinates Mg(2+).

Belongs to the arthropod phospholipase D family. Class II subfamily. It depends on Mg(2+) as a cofactor. Expressed by the venom gland.

The protein localises to the secreted. It carries out the reaction an N-(acyl)-sphingosylphosphocholine = an N-(acyl)-sphingosyl-1,3-cyclic phosphate + choline. The catalysed reaction is an N-(acyl)-sphingosylphosphoethanolamine = an N-(acyl)-sphingosyl-1,3-cyclic phosphate + ethanolamine. The enzyme catalyses a 1-acyl-sn-glycero-3-phosphocholine = a 1-acyl-sn-glycero-2,3-cyclic phosphate + choline. It catalyses the reaction a 1-acyl-sn-glycero-3-phosphoethanolamine = a 1-acyl-sn-glycero-2,3-cyclic phosphate + ethanolamine. Dermonecrotic toxins cleave the phosphodiester linkage between the phosphate and headgroup of certain phospholipids (sphingolipid and lysolipid substrates), forming an alcohol (often choline) and a cyclic phosphate. This toxin acts on sphingomyelin (SM). It may also act on ceramide phosphoethanolamine (CPE), lysophosphatidylcholine (LPC) and lysophosphatidylethanolamine (LPE), but not on lysophosphatidylserine (LPS), and lysophosphatidylglycerol (LPG). It acts by transphosphatidylation, releasing exclusively cyclic phosphate products as second products. Induces dermonecrosis, hemolysis, increased vascular permeability, edema, inflammatory response, and platelet aggregation. This chain is Dermonecrotic toxin LlSicTox-alphaIV2ii, found in Loxosceles laeta (South American recluse spider).